We begin with the raw amino-acid sequence, 269 residues long: Phosphonoacetaldehyde hydrolase (269 aa).

Aspartate 10 (nucleophile) is an active-site residue. The Mg(2+) site is built by aspartate 10 and alanine 12. The active-site Schiff-base intermediate with substrate is the lysine 52. Residue aspartate 186 coordinates Mg(2+).

It belongs to the HAD-like hydrolase superfamily. PhnX family. In terms of assembly, homodimer. Mg(2+) is required as a cofactor.

The catalysed reaction is phosphonoacetaldehyde + H2O = acetaldehyde + phosphate + H(+). Involved in phosphonate degradation. The polypeptide is Phosphonoacetaldehyde hydrolase (Salmonella paratyphi A (strain ATCC 9150 / SARB42)).